A 3788-amino-acid chain; its full sequence is Lysosomal-trafficking regulator (3788 aa).

Disordered stretches follow at residues 148-180 (KSTHRYSVRDARKTQLSTSDSEGNSDEKSTVVS) and 198-217 (EGHLVAKPDPSATKEQVLSD). Ser164 is subject to Phosphoserine. Thr165 carries the post-translational modification Phosphothreonine. Ser166 bears the Phosphoserine mark. One copy of the WD 1 repeat lies at 662-700 (GPTSGLPSPSYRFQGILPSSGSEDLLWKWDALEAYQSFV). Disordered stretches follow at residues 1169–1196 (LGPGDAVTEKSHPSEEELLSQPGDFSEE), 1213–1240 (GYEADSESNPEDVDTQDDGVELNPEAEG), and 1482–1519 (ESAAERGKRVKKRNKPSVLEDSSFEGAEGDRPEVTESI). The span at 1213–1232 (GYEADSESNPEDVDTQDDGV) shows a compositional bias: acidic residues. Ser1503 and Ser1504 each carry phosphoserine. A WD 2 repeat occupies 1576-1620 (SQENIFFPSKWQHLVLTYIQHPQGKKNVHGEISIWVSGQRKTDVI). Ser2099, Ser2118, Ser2203, Ser2207, and Ser2254 each carry phosphoserine. The segment at 2177–2221 (ANGVSRGSPRFPRARVDHKDVGTEPRSDDDSPGDESYPRRPDNLK) is disordered. Over residues 2190–2205 (ARVDHKDVGTEPRSDD) the composition is skewed to basic and acidic residues. Disordered regions lie at residues 2556–2581 (HDSESPVHSPSAHRHSVPPKRRSIAG) and 2659–2681 (NTSQSKTSVSQTEISEEDMHHEQ). A compositionally biased stretch (basic residues) spans 2566–2578 (SAHRHSVPPKRRS). The span at 2659-2671 (NTSQSKTSVSQTE) shows a compositional bias: polar residues. In terms of domain architecture, BEACH-type PH spans 2996 to 3102 (AASESIRVNR…VRDDVYQSIL (107 aa)). Residues 3126–3409 (QITNFEYLTH…QLFHTAHASR (284 aa)) form the BEACH domain. WD repeat units follow at residues 3550–3589 (SQQHQVTSCAWVPDSCQLFTGSKCGVITAYTNRLTSSTPS), 3601–3640 (GHTEEITGLCVCKPYSVMISVSRDGTCIVWDLNRLCYVQS), 3643–3686 (GHKS…VGHV), 3687–3731 (HCRE…PVRE), and 3736–3775 (KSNKPIISLTFSCDGHHLYTANSEGTVIAWCRKDQQRVKL).

As to quaternary structure, interacts with CPAP, LIP8 and ZNF521. In terms of tissue distribution, expressed in the heart, lung, liver, spleen, brain and in different immune cell types (purified B and T lymphocytes, bone marrow-derived macrophages and dendritic cells).

It localises to the cytoplasm. Functionally, adapter protein that regulates and/or fission of intracellular vesicles such as lysosomes. Might regulate trafficking of effectors involved in exocytosis. In cytotoxic T-cells and natural killer (NK) cells, has role in the regulation of size, number and exocytosis of lytic granules. In macrophages and dendritic cells, regulates phagosome maturation by controlling the conversion of early phagosomal compartments into late phagosomes. In macrophages and dendritic cells, specifically involved in TLR3- and TLR4-induced production of pro-inflammatory cytokines by regulating the endosomal TLR3- TICAM1/TRIF and TLR4- TICAM1/TRIF signaling pathways. In Mus musculus (Mouse), this protein is Lysosomal-trafficking regulator (Lyst).